An 820-amino-acid polypeptide reads, in one-letter code: SART-1 family protein DOT2 (820 aa).

Basic and acidic residues-rich tracts occupy residues 1–156, 210–219, and 426–445; these read MEVE…DNRG, EEKRNAEKQR, and LGSR…ERIE. Disordered regions lie at residues 1–177, 210–248, 420–445, 523–544, 564–617, 657–678, 729–748, and 762–820; these read MEVE…SALD, EEKR…EHLS, GLGA…ERIE, SSTN…ENTV, KPES…PDEN, KLVG…SKDR, KLKQ…RMRE, and GHVK…RPKP. S22 carries the post-translational modification Phosphoserine. Coiled-coil stretches lie at residues 58 to 120, 171 to 235, and 433 to 510; these read RDKE…EKEK, KEAS…NLNQ, and RRQA…KEEA. Residues 525–543 show a composition bias toward low complexity; sequence TNQTTDDNTTTGDETQENT. The segment covering 582 to 591 has biased composition (basic and acidic residues); sequence VEVKEEHPDG. Over residues 596-606 the composition is skewed to acidic residues; that stretch reads NDTDMDAAEDS. Basic and acidic residues-rich tracts occupy residues 607 to 617 and 665 to 678; these read SDTKEITPDEN and DGGK…SKDR. Composition is skewed to polar residues over residues 733–744 and 767–776; these read MKNSDTPSQSVQ and GQTSDPQSGF. Basic and acidic residues predominate over residues 792–807; that stretch reads GDRKVEHFLGIKRKSE.

This sequence belongs to the SNU66/SART1 family. As to expression, expressed in lateral root cap, columella, meristem and quiescent center (QC). Expressed in young leaves.

The protein resides in the nucleus. Plays a role in root, shoot and flower development. Probably required for normal root and shoot meristem organization and maintenance and the proper expression of PIN and PLT genes. Involved in leaf vasculature patterning. This Arabidopsis thaliana (Mouse-ear cress) protein is SART-1 family protein DOT2.